We begin with the raw amino-acid sequence, 141 residues long: Cystatin (141 aa).

An N-terminal signal peptide occupies residues 1 to 26 (MVHSQLPVVALLRLLCALLLLPSATM). One can recognise a Cystatin domain in the interval 29–129 (GGLSPRSVTD…CRFQVWSRPW (101 aa)). A Secondary area of contact motif is present at residues 73–77 (QVVAG). Disulfide bonds link C91/C107 and C120/C140.

The protein belongs to the cystatin family. As to expression, expressed at a low level by the venom gland (at protein level).

It is found in the secreted. Its function is as follows. Inhibits various C1 cysteine proteases including cathepsin L, papain and cathepsin B. This protein has no toxic activity and its function in the venom is unknown. It may play a role as a housekeeping or regulatory protein. The chain is Cystatin from Notechis scutatus scutatus (Mainland tiger snake).